Consider the following 159-residue polypeptide: Testis-specific XK-related protein, Y-linked (159 aa).

The next 3 helical transmembrane spans lie at Met-1–Ile-21, Ile-45–Phe-65, and Gly-72–Phe-92.

The protein belongs to the XK family. Testis specific.

Its subcellular location is the membrane. This chain is Testis-specific XK-related protein, Y-linked (XKRY), found in Homo sapiens (Human).